The primary structure comprises 409 residues: Tyrosine--tRNA ligase (409 aa).

Tyrosine 39 contributes to the L-tyrosine binding site. Residues proline 44–serine 53 carry the 'HIGH' region motif. L-tyrosine-binding residues include tyrosine 176 and glutamine 180. Residues lysine 236–threonine 240 carry the 'KMSKS' region motif. Lysine 239 contributes to the ATP binding site. One can recognise an S4 RNA-binding domain in the interval isoleucine 346–alanine 409.

It belongs to the class-I aminoacyl-tRNA synthetase family. TyrS type 1 subfamily. As to quaternary structure, homodimer.

Its subcellular location is the cytoplasm. It catalyses the reaction tRNA(Tyr) + L-tyrosine + ATP = L-tyrosyl-tRNA(Tyr) + AMP + diphosphate + H(+). Its function is as follows. Catalyzes the attachment of tyrosine to tRNA(Tyr) in a two-step reaction: tyrosine is first activated by ATP to form Tyr-AMP and then transferred to the acceptor end of tRNA(Tyr). The polypeptide is Tyrosine--tRNA ligase (Novosphingobium aromaticivorans (strain ATCC 700278 / DSM 12444 / CCUG 56034 / CIP 105152 / NBRC 16084 / F199)).